A 628-amino-acid chain; its full sequence is Basal cell adhesion molecule (628 aa).

An N-terminal signal peptide occupies residues methionine 1–alanine 31. Ig-like V-type domains lie at glutamate 32–lysine 142 and proline 150–glycine 253. Residues glutamate 32–alanine 547 are Extracellular-facing. 3 disulfide bridges follow: cysteine 53/cysteine 125, cysteine 172/cysteine 237, and cysteine 291/cysteine 337. Ig-like C2-type domains are found at residues proline 254–glutamate 355, glutamate 355–arginine 441, and proline 448–glycine 538. Asparagine 321, asparagine 330, and asparagine 378 each carry an N-linked (GlcNAc...) asparagine glycan. 2 cysteine pairs are disulfide-bonded: cysteine 384–cysteine 424 and cysteine 473–cysteine 522. The chain crosses the membrane as a helical span at residues glycine 548–phenylalanine 568. Residues tyrosine 569–cysteine 628 lie on the Cytoplasmic side of the membrane. Positions cysteine 580–cysteine 628 are disordered. Serine 596, serine 598, serine 600, and serine 621 each carry phosphoserine. Gly residues predominate over residues alanine 613–cysteine 628.

In terms of assembly, homodimer. Interacts with ITGA4:ITGB1. Interacts with spectrins SPTA1 and SPTB1. In terms of processing, epinephrine-stimulated phosphorylation of Ser-621 by PKA enhances adhesion to laminin. Ser-621 can also be phosphorylated by AKT1.

Its subcellular location is the cell membrane. Its function is as follows. Transmembrane glycoprotein that functions as both a receptor and an adhesion molecule playing a crucial role in cell adhesion, motility, migration and invasion. Extracellular domain enables binding to extracellular matrix proteins, such as laminin, integrin and other ligands while its intracellular domain interacts with cytoskeletal proteins like hemoglobin, facilitating cell signal transduction. Serves as a receptor for laminin alpha-5/LAMA5 to promote cell adhesion. Mechanistically, JAK2 induces BCAM phosphorylation and activates its adhesion to laminin by stimulating a Rap1/AKT signaling pathway in the absence of EPOR. This Bos taurus (Bovine) protein is Basal cell adhesion molecule (BCAM).